A 215-amino-acid chain; its full sequence is MSKFYDWFQERLEIQLIADDISAKYVPPHVNVFYCFGGMTLTCFLVQLATGFAMTFYYKPTTIEAFSSIQHIMTQVSFGWLIRSLHRWSASMMVLMMILHIFRVYLTGGFKKPRELTWITGVILAVLTVSFGVTGYSLPWDQVGYWACKIVTGVPEAIPVVGDNVVEILRGGTGVGQATLTRFYSLHTLFLPALSVIFLLAHFLMIRKQGISGPL.

A helical transmembrane segment spans residues 32 to 52 (VFYCFGGMTLTCFLVQLATGF). Residue cysteine 35 coordinates heme c. Heme b contacts are provided by histidine 86 and histidine 100. 3 helical membrane-spanning segments follow: residues 90–110 (ASMMVLMMILHIFRVYLTGGF), 116–136 (LTWITGVILAVLTVSFGVTGY), and 186–206 (LHTLFLPALSVIFLLAHFLMI). Positions 187 and 202 each coordinate heme b.

The protein belongs to the cytochrome b family. PetB subfamily. As to quaternary structure, the 4 large subunits of the cytochrome b6-f complex are cytochrome b6, subunit IV (17 kDa polypeptide, PetD), cytochrome f and the Rieske protein, while the 4 small subunits are PetG, PetL, PetM and PetN. The complex functions as a dimer. The cofactor is heme b. It depends on heme c as a cofactor.

Its subcellular location is the plastid. The protein localises to the chloroplast thylakoid membrane. Functionally, component of the cytochrome b6-f complex, which mediates electron transfer between photosystem II (PSII) and photosystem I (PSI), cyclic electron flow around PSI, and state transitions. The chain is Cytochrome b6 from Cyanidium caldarium (Red alga).